The sequence spans 243 residues: Vesicle-associated membrane protein-associated protein B (243 aa).

A2 is modified (N-acetylalanine). Residues 2-218 (AKVEQVLSLE…AALAATGKEE (217 aa)) are Cytoplasmic-facing. The MSP domain maps to 7 to 124 (VLSLEPQHEL…MDSKLRCVFE (118 aa)). S146 is modified (phosphoserine). A Glycyl lysine isopeptide (Lys-Gly) (interchain with G-Cter in SUMO1) cross-link involves residue K147. Phosphoserine occurs at positions 156 and 159. The stretch at 161–196 (LDDTEVKKVMEECRRLQGEVQRLREESRQLKEEDGL) forms a coiled coil. Residue S206 is modified to Phosphoserine. A helical; Anchor for type IV membrane protein transmembrane segment spans residues 219-239 (GLSARLLALVVLFFIVGVIIG).

This sequence belongs to the VAMP-associated protein (VAP) (TC 9.B.17) family. Homodimer, and heterodimer with VAPA. Interacts with VAMP1 and VAMP2. Interacts (via MSP domain) with ZFYVE27. Interacts with RMDN3. Interacts with KIF5A in a ZFYVE27-dependent manner. Interacts (via MSP domain) with STARD3 (via phospho-FFAT motif). Interacts with STARD3NL (via FFAT motif). Interacts with CERT1. Interacts with PLEKHA3 and SACM1L to form a ternary complex. Interacts with VPS13A (via FFAT motif). Interacts with RB1CC1 (via phosphorylated FFAT motif), MIGA2 (via phosphorylated FFAT motif), RMDN3 (via phosphorylated FFAT motif), OSBPL1A (via FFAT motif), KCNB1 (via phosphorylated FFAT motif) and KCNB2 (via phosphorylated FFAT motif). Interacts (via MSP domain) with WDR44 (via FFAT motif); the interactions connect the endoplasmic reticulum (ER) with the endosomal tubule.

Its subcellular location is the endoplasmic reticulum membrane. In terms of biological role, endoplasmic reticulum (ER)-anchored protein that mediates the formation of contact sites between the ER and endosomes via interaction with FFAT motif-containing proteins such as STARD3 or WDR44. Interacts with STARD3 in a FFAT motif phosphorylation dependent manner. Via interaction with WDR44 participates in neosynthesized protein export. Participates in the endoplasmic reticulum unfolded protein response (UPR) by inducing ERN1/IRE1 activity. Involved in cellular calcium homeostasis regulation. This is Vesicle-associated membrane protein-associated protein B from Mus musculus (Mouse).